A 174-amino-acid polypeptide reads, in one-letter code: Protein GrpE (174 aa).

The segment at 1-35 (MAQDIKNEEVEEVQEEEVVETAEETTPEKSELDLA) is disordered. Residues 9 to 25 (EVEEVQEEEVVETAEET) show a composition bias toward acidic residues. Over residues 26–35 (TPEKSELDLA) the composition is skewed to basic and acidic residues.

It belongs to the GrpE family. Homodimer.

The protein resides in the cytoplasm. Participates actively in the response to hyperosmotic and heat shock by preventing the aggregation of stress-denatured proteins, in association with DnaK and GrpE. It is the nucleotide exchange factor for DnaK and may function as a thermosensor. Unfolded proteins bind initially to DnaJ; upon interaction with the DnaJ-bound protein, DnaK hydrolyzes its bound ATP, resulting in the formation of a stable complex. GrpE releases ADP from DnaK; ATP binding to DnaK triggers the release of the substrate protein, thus completing the reaction cycle. Several rounds of ATP-dependent interactions between DnaJ, DnaK and GrpE are required for fully efficient folding. The sequence is that of Protein GrpE from Streptococcus pneumoniae (strain ATCC BAA-255 / R6).